A 219-amino-acid chain; its full sequence is HTH-type transcriptional regulator LutR (219 aa).

The HTH gntR-type domain maps to methionine 1–phenylalanine 56. The segment at residues valine 16–serine 35 is a DNA-binding region (H-T-H motif).

Its function is as follows. Negatively regulates the transcription of the lutABC operon, which is required for L-lactate utilization. LutR activity is regulated by lactate, since presence of L-lactate, that probably binds to LutR, leads to derepression of the operon. Also appears to be essential for bacilysin biosynthesis. The protein is HTH-type transcriptional regulator LutR (lutR) of Bacillus subtilis (strain 168).